The sequence spans 671 residues: MLWEKVMFIANNKYKLVTKYKPSGDQNQAIEKLNKAIIENKKHQVLLGATGTGKTFTIANIIAKHNKQALVIAHNKTLAMQLYYELKEMFPENRVEYFVSNFDFFQPEAYIPSKDLYIDKDSRQNMELDMMRLSACNALLTRNDTIVVASVAALFALQNPLEYSSAFIELKVGQKIKRNELLTWLVRSGYTRNDIENQLGSFSAKGDVVKIVPGWVNNIMFRISLFDDEIESIHTLNTITNSILDNITTVTIHPAQSYITPQDKLKTICNNIRNELVQRLAELQSENKLLEAQRLEQRTKYDLESLEEFGFCSGIENYSSHLDFRSKGQRPYVLLDYFNNDFITIVDESHITLPQIRGMYNTDRSRKLTLVEYGFRLPSALDNRPLNFDEFNSLIKQVIYTSATPGDYELDLVNHQVVQQIIRPTGLLDPQIEIRKTTNQIDDIINEIHLRKLQNERVFITTLTIRMSEDLTAFLQEKNIKVAYLHSELKTLERSEILNDLRKGVYDVVVGVNLLREGLDLPEVSLVCILDADKQGFLRNYRSLIQTIGRVARNVNGKAIMYADTVSQAMDEAIKETNRRRKIQEEFNKKHNIVPKTISKAISESILSEQTKKTLAKAKKIKDKKQKLQTIQQTIDNLRQEMLQAAKELDFERAAILRDTIIELENEKNTN.

The Helicase ATP-binding domain maps to 35-423 (KAIIENKKHQ…NHQVVQQIIR (389 aa)). 48 to 55 (GATGTGKT) contributes to the ATP binding site. Positions 101–124 (NFDFFQPEAYIPSKDLYIDKDSRQ) match the Beta-hairpin motif. In terms of domain architecture, Helicase C-terminal spans 440–602 (QIDDIINEIH…IVPKTISKAI (163 aa)). A UVR domain is found at 632–667 (QQTIDNLRQEMLQAAKELDFERAAILRDTIIELENE).

This sequence belongs to the UvrB family. As to quaternary structure, forms a heterotetramer with UvrA during the search for lesions. Interacts with UvrC in an incision complex.

The protein resides in the cytoplasm. The UvrABC repair system catalyzes the recognition and processing of DNA lesions. A damage recognition complex composed of 2 UvrA and 2 UvrB subunits scans DNA for abnormalities. Upon binding of the UvrA(2)B(2) complex to a putative damaged site, the DNA wraps around one UvrB monomer. DNA wrap is dependent on ATP binding by UvrB and probably causes local melting of the DNA helix, facilitating insertion of UvrB beta-hairpin between the DNA strands. Then UvrB probes one DNA strand for the presence of a lesion. If a lesion is found the UvrA subunits dissociate and the UvrB-DNA preincision complex is formed. This complex is subsequently bound by UvrC and the second UvrB is released. If no lesion is found, the DNA wraps around the other UvrB subunit that will check the other stand for damage. This chain is UvrABC system protein B, found in Mycoplasma mycoides subsp. mycoides SC (strain CCUG 32753 / NCTC 10114 / PG1).